Reading from the N-terminus, the 66-residue chain is Large ribosomal subunit protein bL33c (66 aa).

The protein belongs to the bacterial ribosomal protein bL33 family.

The protein resides in the plastid. It localises to the chloroplast. The sequence is that of Large ribosomal subunit protein bL33c from Liriodendron tulipifera (Tuliptree).